Consider the following 102-residue polypeptide: Thioredoxin (102 aa).

The Thioredoxin domain maps to 1 to 102 (MVKIISSENF…FLTNLINKHA (102 aa)). The cysteines at positions 28 and 31 are disulfide-linked.

Belongs to the thioredoxin family.

Its function is as follows. Participates in various redox reactions through the reversible oxidation of its active center dithiol to a disulfide and catalyzes dithiol-disulfide exchange reactions. This Chlamydia pneumoniae (Chlamydophila pneumoniae) protein is Thioredoxin (trxA).